A 1401-amino-acid chain; its full sequence is Uveal autoantigen with coiled-coil domains and ankyrin repeats protein (1401 aa).

ANK repeat units lie at residues 25–53, 54–83, 87–116, 120–149, 153–182, and 186–215; these read LMRAAERGDVEKVSSILAKKGVNPGKLDV, EGRSAFHVVASKGNLECLNAILIHGVDITT, AGRNALHLAAKYGHALCLQKLLQYNCPTEH, QGRTALHDAAMADCPSSIQLLCDHGASVNA, DGRTPLVLATQMCRPTICQLLIDRGADINS, and QNRTALMLGCEYGCKDAVEVLIKNGADVTL. Ser-265 carries the phosphoserine modification. Coiled coils occupy residues 273-361, 423-827, and 856-1368; these read TKSN…SRFK, ENEI…EKIY, and ALSS…VIAI. A Glycyl lysine isopeptide (Lys-Gly) (interchain with G-Cter in SUMO2) cross-link involves residue Lys-1020.

Component of the apoptosome complex, composed of APAF1, pro-caspase-9 and UACA. In the complex, it probably interacts directly with APAF1. Interacts with LGALS3. Interacts with ARF6 and ACTB. Interacts with RAB39A. As to expression, highly expressed in muscle and heart, moderately in liver, kidney and pancreas, and weakly in placenta and lung.

Its subcellular location is the nucleus. It localises to the cytoplasm. It is found in the cytoskeleton. Regulates APAF1 expression and plays an important role in the regulation of stress-induced apoptosis. Promotes apoptosis by regulating three pathways, apoptosome up-regulation, LGALS3/galectin-3 down-regulation and NF-kappa-B inactivation. Regulates the redistribution of APAF1 into the nucleus after proapoptotic stress. Down-regulates the expression of LGALS3 by inhibiting NFKB1. In terms of biological role, modulates isoactin dynamics to regulate the morphological alterations required for cell growth and motility. Interaction with ARF6 may modulate cell shape and motility after injury. May be involved in multiple neurite formation. The polypeptide is Uveal autoantigen with coiled-coil domains and ankyrin repeats protein (UACA) (Bos taurus (Bovine)).